We begin with the raw amino-acid sequence, 705 residues long: Calpain-1 catalytic subunit (705 aa).

In terms of domain architecture, Calpain catalytic spans 48–347 (LFRDPQFPAG…FSRLEICNLT (300 aa)). Catalysis depends on residues cysteine 108, histidine 265, and asparagine 289. Residues 348–517 (PDALTKDELS…KQSDTAELDE (170 aa)) are domain III. A linker region spans residues 518–533 (EISADLADEEEITEDD). The EF-hand 1 domain maps to 530 to 565 (TEDDIEDGFKNMFQQLAGEDMEISVFELKTILNRVI). Residues 534 to 704 (IEDGFKNMFQ…LAEWLLLTMC (171 aa)) are domain IV. Ca(2+) contacts are provided by aspartate 549, glutamate 551, glutamate 556, aspartate 589, aspartate 591, serine 593, arginine 595, glutamate 600, aspartate 619, aspartate 621, serine 623, threonine 625, and glutamate 630. EF-hand domains follow at residues 606 to 641 (NKIR…AGFK) and 671 to 705 (VKLE…TMCG).

The protein belongs to the peptidase C2 family. Heterodimer of large (catalytic) and a small (regulatory) subunit. Ca(2+) serves as cofactor. Post-translationally, the N-terminus is blocked. In terms of tissue distribution, ubiquitously expressed.

The protein resides in the cytoplasm. It is found in the cell membrane. The enzyme catalyses Broad endopeptidase specificity.. Its activity is regulated as follows. Activated by micromolar concentrations of calcium and inhibited by calpastatin. In terms of biological role, calcium-regulated non-lysosomal thiol-protease which catalyze limited proteolysis of substrates involved in cytoskeletal remodeling and signal transduction. In Gallus gallus (Chicken), this protein is Calpain-1 catalytic subunit.